Here is a 698-residue protein sequence, read N- to C-terminus: Macrophomene synthase (698 aa).

The terpene cyclase stretch occupies residues 21 to 340; it reads MEYMYSVPLD…SCDRYSSYRR (320 aa). Position 113 (Asp-113) interacts with Mg(2+). The DDXXD 1 signature appears at 113–117; that stretch reads DNIAE. The NSE/DTE motif lies at 242-250; sequence NDFFSFNYE. The tract at residues 341–696 is prenyltransferase; it reads EKHQMELPIR…IQLALERLRI (356 aa). Residues 368-387 are disordered; it reads LPNGKQLDAPTESSGKDLSD. Isopentenyl diphosphate is bound by residues Lys-417, Arg-420, and His-449. Mg(2+) contacts are provided by Asp-456 and Asp-460. The short motif at 456 to 460 is the DDXXD 2 element; that stretch reads DDIED. Arg-465 provides a ligand contact to dimethylallyl diphosphate. Arg-466 lines the isopentenyl diphosphate pocket. Residues Lys-543, Thr-544, Gln-579, Asn-586, Lys-596, and Lys-606 each coordinate dimethylallyl diphosphate.

In the N-terminal section; belongs to the terpene synthase family. It in the C-terminal section; belongs to the FPP/GGPP synthase family. Hexamer. Mg(2+) serves as cofactor.

The enzyme catalyses 5 isopentenyl diphosphate + dimethylallyl diphosphate = all-trans-hexaprenyl diphosphate + 5 diphosphate. It catalyses the reaction all-trans-hexaprenyl diphosphate = macrophomene + diphosphate. Functionally, bifunctional terpene synthase that converts dimethylallyl diphosphate (DMAPP) and isopentenyl diphosphate (IPP) into macrophomene as a single product. The C-terminal prenyltransferase (PT) domain of MpMS catalyzes formation of hexaprenyl diphosphate (HexPP), whereas the N-terminal terpene cyclase (TC) domain catalyzes the cyclization of HexPP to macrophomene. This is Macrophomene synthase from Macrophomina phaseolina (strain MS6) (Charcoal rot fungus).